Consider the following 306-residue polypeptide: Methyl-CpG-binding domain-containing protein 7 (306 aa).

Polar residues predominate over residues 1–11 (MQTRSSSSPSA). The tract at residues 1–21 (MQTRSSSSPSANHRRETQLQI) is disordered. 3 MBD domains span residues 21-92 (IADP…QDKT), 106-171 (GVEY…RVLQ), and 172-242 (NRRG…ERLP). Asymmetric dimethylarginine occurs at positions 118, 145, and 174. Residues 163–306 (IEQQLRVLQN…AFVSLIEDRS (144 aa)) are required for interaction with PRMT11.

In terms of assembly, interacts with PRMT11. Interacts (via C-terminus) with IDM2, but not with IDM1. Interacts with IDM3. Part of a complex made of MBD7, IDM1, IDM2 and IDM3. In terms of processing, methylated by PRMT11. Expressed in leaves, buds, flowers, stems, siliques, mature seeds and roots.

It is found in the nucleus. The protein localises to the chromosome. Transcriptional regulator that binds CpG islands in promoters where the DNA is methylated at position 5 of cytosine within CpG dinucleotides. May directly affect chromatin structure by inducing intra- and inter- chromatin compaction via bridging over multiple methylated CpG sites. Acts as an anti-silencing factor that prevents DNA hypermethylation and gene repression. Requires high mCG density for binding. Recognizes preferentially mCGs located in transposable elements. Required for active DNA demethylation. Prefers to target genomic loci around chromocenters. The polypeptide is Methyl-CpG-binding domain-containing protein 7 (Arabidopsis thaliana (Mouse-ear cress)).